The primary structure comprises 241 residues: Triosephosphate isomerase (241 aa).

9–11 (NWK) lines the substrate pocket. His88 acts as the Electrophile in catalysis. The active-site Proton acceptor is the Glu158. Substrate-binding positions include Gly164, Ser203, and 224 to 225 (GG).

The protein belongs to the triosephosphate isomerase family. As to quaternary structure, homodimer.

The protein localises to the cytoplasm. The enzyme catalyses D-glyceraldehyde 3-phosphate = dihydroxyacetone phosphate. Its pathway is carbohydrate biosynthesis; gluconeogenesis. It participates in carbohydrate degradation; glycolysis; D-glyceraldehyde 3-phosphate from glycerone phosphate: step 1/1. In terms of biological role, involved in the gluconeogenesis. Catalyzes stereospecifically the conversion of dihydroxyacetone phosphate (DHAP) to D-glyceraldehyde-3-phosphate (G3P). The protein is Triosephosphate isomerase of Dichelobacter nodosus (strain VCS1703A).